The primary structure comprises 169 residues: Large ribosomal subunit protein bL9 (169 aa).

It belongs to the bacterial ribosomal protein bL9 family.

In terms of biological role, binds to the 23S rRNA. In Chlamydia pneumoniae (Chlamydophila pneumoniae), this protein is Large ribosomal subunit protein bL9.